The following is a 277-amino-acid chain: MEWWTAFQAFILGVVEGLTEFLPISSTGHQIIVADLIGFGGERAKAFNIIIQLAAILAVVWEFRGKIFQVVRDLPSQRQAQRFTANLLIAFFPAVVLGVLFADLIHEWLFNPITVALALVVGGVVMLWAERRKHVIRAEHVDDMTWKDALKIGCAQCLAMIPGTSRSGATIIGGLLFGLSRKAATEFSFFLAMPTMVGAAVYSGYVYRDLFRPEDLPVFAVGFVTSFVFAMLAVRALLKFIGNHSYAAFAWYRIAFGLLILATWQFHLIDWSTAGEV.

6 helical membrane-spanning segments follow: residues 47-67 (FNII…RGKI), 85-105 (ANLL…ADLI), 108-128 (WLFN…VMLW), 187-207 (FSFF…GYVY), 218-238 (VFAV…RALL), and 249-269 (FAWY…FHLI).

It belongs to the UppP family.

The protein resides in the cell inner membrane. It catalyses the reaction di-trans,octa-cis-undecaprenyl diphosphate + H2O = di-trans,octa-cis-undecaprenyl phosphate + phosphate + H(+). Its function is as follows. Catalyzes the dephosphorylation of undecaprenyl diphosphate (UPP). Confers resistance to bacitracin. In Pseudomonas aeruginosa (strain ATCC 15692 / DSM 22644 / CIP 104116 / JCM 14847 / LMG 12228 / 1C / PRS 101 / PAO1), this protein is Undecaprenyl-diphosphatase.